A 240-amino-acid chain; its full sequence is uncharacterized protein (240 aa).

The segment at 93–160 is disordered; sequence QEASGCTVGE…AGGGAAASGQ (68 aa). Low complexity-rich tracts occupy residues 110–119 and 129–150; these read AQPSQPAQGG and GGAE…PAEN.

This is an uncharacterized protein from Streptomyces viridochromogenes.